A 183-amino-acid chain; its full sequence is ATP synthase subunit delta (183 aa).

It belongs to the ATPase delta chain family. In terms of assembly, F-type ATPases have 2 components, F(1) - the catalytic core - and F(0) - the membrane proton channel. F(1) has five subunits: alpha(3), beta(3), gamma(1), delta(1), epsilon(1). F(0) has three main subunits: a(1), b(2) and c(10-14). The alpha and beta chains form an alternating ring which encloses part of the gamma chain. F(1) is attached to F(0) by a central stalk formed by the gamma and epsilon chains, while a peripheral stalk is formed by the delta and b chains.

It is found in the cell membrane. In terms of biological role, f(1)F(0) ATP synthase produces ATP from ADP in the presence of a proton or sodium gradient. F-type ATPases consist of two structural domains, F(1) containing the extramembraneous catalytic core and F(0) containing the membrane proton channel, linked together by a central stalk and a peripheral stalk. During catalysis, ATP synthesis in the catalytic domain of F(1) is coupled via a rotary mechanism of the central stalk subunits to proton translocation. Functionally, this protein is part of the stalk that links CF(0) to CF(1). It either transmits conformational changes from CF(0) to CF(1) or is implicated in proton conduction. This is ATP synthase subunit delta from Oenococcus oeni (strain ATCC BAA-331 / PSU-1).